The sequence spans 624 residues: Chaperone protein HtpG (624 aa).

Residues 1-338 form an a; substrate-binding region; the sequence is MNNKNKITHT…SQDLPLNISR (338 aa). The interval 339–552 is b; the sequence is EILQDSSITH…TNDMSTQMAK (214 aa). The interval 553 to 624 is c; sequence IFSAAGQPIP…IQRINNFFIS (72 aa).

Belongs to the heat shock protein 90 family. In terms of assembly, homodimer.

Its subcellular location is the cytoplasm. Its function is as follows. Molecular chaperone. Has ATPase activity. In Buchnera aphidicola subsp. Cinara cedri (strain Cc), this protein is Chaperone protein HtpG.